Here is a 329-residue protein sequence, read N- to C-terminus: GTP 3',8-cyclase (329 aa).

Positions 8–234 constitute a Radical SAM core domain; that stretch reads AFARKFYYLR…QLRQRSDGPA (227 aa). Arginine 17 is a binding site for GTP. Positions 24 and 28 each coordinate [4Fe-4S] cluster. Tyrosine 30 contacts S-adenosyl-L-methionine. Residue cysteine 31 participates in [4Fe-4S] cluster binding. Arginine 68 contacts GTP. Glycine 72 is an S-adenosyl-L-methionine binding site. Threonine 99 is a GTP binding site. Serine 123 serves as a coordination point for S-adenosyl-L-methionine. GTP is bound at residue lysine 160. Methionine 194 serves as a coordination point for S-adenosyl-L-methionine. [4Fe-4S] cluster-binding residues include cysteine 257 and cysteine 260. 262–264 provides a ligand contact to GTP; sequence RLR. Cysteine 274 serves as a coordination point for [4Fe-4S] cluster.

It belongs to the radical SAM superfamily. MoaA family. In terms of assembly, monomer and homodimer. It depends on [4Fe-4S] cluster as a cofactor.

It catalyses the reaction GTP + AH2 + S-adenosyl-L-methionine = (8S)-3',8-cyclo-7,8-dihydroguanosine 5'-triphosphate + 5'-deoxyadenosine + L-methionine + A + H(+). It functions in the pathway cofactor biosynthesis; molybdopterin biosynthesis. Catalyzes the cyclization of GTP to (8S)-3',8-cyclo-7,8-dihydroguanosine 5'-triphosphate. This Salmonella paratyphi B (strain ATCC BAA-1250 / SPB7) protein is GTP 3',8-cyclase.